The following is a 617-amino-acid chain: Hemagglutinin glycoprotein (617 aa).

Residues 1-37 lie on the Intravirion side of the membrane; sequence MSPQRDRINAFYKDNPHPKGSRIVINREHLMIDRPYV. The segment at 1–154 is stalk; the sequence is MSPQRDRINA…RIKLDYDQYC (154 aa). A helical; Signal-anchor for type II membrane protein transmembrane segment spans residues 38–58; it reads LLAVLFVMFLSLIGLLAIAGI. Residues 59 to 617 lie on the Virion surface side of the membrane; that stretch reads RLHRAAIYTA…VTREDGTNRR (559 aa). N168, N187, N200, N215, and N238 each carry an N-linked (GlcNAc...) asparagine; by host glycan. Disulfide bonds link C188–C606, C287–C300, C381–C494, C386–C394, and C570–C579. An interaction with host NECTIN4 receptor region spans residues 458–543; the sequence is PMKNLALGVI…VEHAVVYYVY (86 aa).

This sequence belongs to the paramyxoviruses hemagglutinin-neuraminidase family. Non-sialidase subfamily. In terms of assembly, homodimer; disulfide-linked. Further forms homotetramer (dimer of dimers). Interacts (via C-terminus) with human NECTIN4 (via N-terminus); this interaction allows attachment to the respiratory epithelium and viral entry. Interacts (via C-terminus) with human SLAMF1/CD150 (via N-terminus); this interaction allows attachment and viral entry into the CD150-expressing immune cells. Interacts with human CD46 antigen.

The protein localises to the virion membrane. It localises to the host cell membrane. Its function is as follows. Attaches the virus to the human SLAMF1/CD150 receptor for entry into host dendritic cells, macrophages, activated memory T cells and naive or memory B cells, thereby explaining the long immunosuppression that follows infection. In the respiratory airways, binds to the NECTIN4 receptor for entry into the host cell. Binding of H protein to the receptor induces a conformational change that allows the F protein to trigger virion/cell membranes fusion. The vaccine and laboratory-adapted strains use host CD46 as an alternate receptor. The high degree of interaction between H and CD46 results in down-regulation of the latter from the surface of infected cells, rendering them more sensitive to c3b-mediated complement lysis. This Homo sapiens (Human) protein is Hemagglutinin glycoprotein (H).